We begin with the raw amino-acid sequence, 174 residues long: Protein SHI RELATED SEQUENCE 3 (174 aa).

Zn(2+)-binding residues include C9, C12, C20, C25, C29, and C36. The zn(2)-C6 fungal-type; degenerate DNA-binding region spans C9–C36. A Required for homo- and heterodimerization motif is present at residues I110 to H113.

Belongs to the SHI protein family.

It localises to the nucleus. Functionally, transcription activator that binds DNA on 5'-ACTCTAC-3' and promotes auxin homeostasis-regulating gene expression (e.g. YUC genes), as well as genes affecting stamen development, cell expansion and timing of flowering. Synergistically with other SHI-related proteins, regulates gynoecium, stamen and leaf development in a dose-dependent manner, controlling apical-basal patterning. Promotes style and stigma formation, and influences vascular development during gynoecium development. May also have a role in the formation and/or maintenance of the shoot apical meristem (SAM). The sequence is that of Protein SHI RELATED SEQUENCE 3 (SRS3) from Arabidopsis thaliana (Mouse-ear cress).